The following is a 465-amino-acid chain: MSTQNNQSIRSSCDRCRSHKLKCTVAPENTRSGSSRCTRCIRAQVTCVFGHRSQSKRSTNVKKADLRSGTNGQETTSMQASTIVPGSPDLWVGRQEVEEGLHIGSDSGPSMADGDLWAELGTNHDLSLFDITPSSLPTHNSQQQFSATDFCSAPMAPHSALSTINSQEWQLDLSEYPNQTTTGPHAIVQLSALVAKIHETSRTLEESFWTSLAESNQLKSYPIGRVLSLSQDFSTILECIWASKNMDCKQSLSCAASDNHGQDATSSFELEDVLDYGELLSTVGTSPGRSDFSTSTHSSVATTVDMPTMLLVLSCYTSLTKLYSLVFEHFESHLSHLPHSYTSQTAHASPKWGLGLQLGELPSADETCTKVYTAVQILLDAFQSVEDVVGLPRSLSAVRQQSCGKEEEGESGDVFNRASLWTDFLAKSVFKATVKSSSEEDCEEIRQLSIKVKSLKSLIRERMKL.

A DNA-binding region (zn(2)-C6 fungal-type) is located at residues 13 to 47; it reads CDRCRSHKLKCTVAPENTRSGSSRCTRCIRAQVTC. The tract at residues 58-88 is disordered; sequence STNVKKADLRSGTNGQETTSMQASTIVPGSP. The span at 68-84 shows a compositional bias: polar residues; the sequence is SGTNGQETTSMQASTIV.

It localises to the nucleus. In terms of biological role, transcription activator that specifically regulates the expression of the gene cluster that mediates the biosynthesis of fusarisetin A. The sequence is that of Fusarisetin A cluster transcription factor fsa5 from Fusarium sp. (strain FN080326).